The chain runs to 156 residues: 3-dehydroquinate dehydratase (156 aa).

Catalysis depends on Tyr24, which acts as the Proton acceptor. Substrate contacts are provided by Asn76, His82, and Asp89. The Proton donor role is filled by His102. Residues 103-104 (IS) and Arg113 each bind substrate.

It belongs to the type-II 3-dehydroquinase family. Homododecamer.

The enzyme catalyses 3-dehydroquinate = 3-dehydroshikimate + H2O. Its pathway is metabolic intermediate biosynthesis; chorismate biosynthesis; chorismate from D-erythrose 4-phosphate and phosphoenolpyruvate: step 3/7. Functionally, catalyzes a trans-dehydration via an enolate intermediate. This is 3-dehydroquinate dehydratase from Nitrobacter winogradskyi (strain ATCC 25391 / DSM 10237 / CIP 104748 / NCIMB 11846 / Nb-255).